We begin with the raw amino-acid sequence, 140 residues long: Translation initiation factor 2 subunit beta (140 aa).

It belongs to the eIF-2-beta/eIF-5 family. As to quaternary structure, heterotrimer composed of an alpha, a beta and a gamma chain.

In terms of biological role, eIF-2 functions in the early steps of protein synthesis by forming a ternary complex with GTP and initiator tRNA. This chain is Translation initiation factor 2 subunit beta, found in Pyrococcus furiosus (strain ATCC 43587 / DSM 3638 / JCM 8422 / Vc1).